The sequence spans 314 residues: 3'-5' exoribonuclease YhaM (314 aa).

The region spanning 163–279 is the HD domain; sequence HVVSMLDLAK…LHYIDNLDAK (117 aa).

This sequence belongs to the YhaM family.

Its function is as follows. Shows a 3'-5' exoribonuclease activity. The sequence is that of 3'-5' exoribonuclease YhaM from Bacillus cereus (strain G9842).